The chain runs to 1221 residues: Putative DNA-directed RNA polymerase II subunit RPB2 homolog (1221 aa).

2 stretches are compositionally biased toward low complexity: residues 1 to 54 (MSRG…SASS) and 692 to 701 (PAPSSSPSDS). Disordered regions lie at residues 1–63 (MSRG…PMSE) and 673–701 (RGSGYDSPPAPEERDIEMDPAPSSSPSDS). Aspartate 823 is a Mg(2+) binding site. Zn(2+) contacts are provided by cysteine 1174, cysteine 1177, cysteine 1187, and cysteine 1190. The C4-type zinc-finger motif lies at 1174 to 1190 (CKECGRISDHFEYCRMC).

The protein belongs to the RNA polymerase beta chain family.

The catalysed reaction is RNA(n) + a ribonucleoside 5'-triphosphate = RNA(n+1) + diphosphate. Component of the DNA-dependent RNA polymerase that catalyzes the transcription of DNA into RNA using the four ribonucleoside triphosphates as substrates. Second largest component of RNA polymerase II which synthesizes mRNA precursors and many functional non-coding RNAs. Proposed to contribute to the polymerase catalytic activity and forms the polymerase active center together with the largest subunit. The sequence is that of Putative DNA-directed RNA polymerase II subunit RPB2 homolog from Dryophytes versicolor (chameleon treefrog).